The chain runs to 278 residues: Undecaprenyl-diphosphatase (278 aa).

A run of 8 helical transmembrane segments spans residues 2 to 22, 44 to 64, 85 to 105, 113 to 133, 150 to 170, 189 to 209, 223 to 243, and 253 to 273; these read ALVEIFKAILLGIVEGITEWL, AFMEMFFVVIQLGAILAVVLL, IEMWFKIIVSCIPAGVIGLLW, FYNYQTVAVMLIIFGILFIVI, ITYTTAFMIGIFQLIAAIFPG, TVAAEFTFFLAIPVMFGASAL, LMILLIGMVVAFIVSVISIKF, and FKIFGWYRIILGVIVLLYFSA.

It belongs to the UppP family.

The protein resides in the cell membrane. It carries out the reaction di-trans,octa-cis-undecaprenyl diphosphate + H2O = di-trans,octa-cis-undecaprenyl phosphate + phosphate + H(+). Catalyzes the dephosphorylation of undecaprenyl diphosphate (UPP). Confers resistance to bacitracin. This Desulfitobacterium hafniense (strain DSM 10664 / DCB-2) protein is Undecaprenyl-diphosphatase.